The primary structure comprises 161 residues: S-ribosylhomocysteine lyase (161 aa).

Fe cation contacts are provided by histidine 53, histidine 57, and cysteine 124.

Belongs to the LuxS family. In terms of assembly, homodimer. It depends on Fe cation as a cofactor.

It carries out the reaction S-(5-deoxy-D-ribos-5-yl)-L-homocysteine = (S)-4,5-dihydroxypentane-2,3-dione + L-homocysteine. Involved in the synthesis of autoinducer 2 (AI-2) which is secreted by bacteria and is used to communicate both the cell density and the metabolic potential of the environment. The regulation of gene expression in response to changes in cell density is called quorum sensing. Catalyzes the transformation of S-ribosylhomocysteine (RHC) to homocysteine (HC) and 4,5-dihydroxy-2,3-pentadione (DPD). This chain is S-ribosylhomocysteine lyase, found in Phocaeicola vulgatus (strain ATCC 8482 / DSM 1447 / JCM 5826 / CCUG 4940 / NBRC 14291 / NCTC 11154) (Bacteroides vulgatus).